Here is a 300-residue protein sequence, read N- to C-terminus: GTPase Era (300 aa).

One can recognise an Era-type G domain in the interval 8 to 176 (RCGYVAIVGR…EAQIAKHLPE (169 aa)). The G1 stretch occupies residues 16–23 (GRPNVGKS). A GTP-binding site is contributed by 16-23 (GRPNVGKS). Positions 42–46 (QTTRH) are G2. Residues 63–66 (DTPG) are G3. GTP is bound by residues 63 to 67 (DTPGM) and 125 to 128 (NKTD). The segment at 125 to 128 (NKTD) is G4. The interval 155 to 157 (ISA) is G5. The KH type-2 domain maps to 199-283 (VREKIMRQLG…MLNLWVKVKG (85 aa)).

This sequence belongs to the TRAFAC class TrmE-Era-EngA-EngB-Septin-like GTPase superfamily. Era GTPase family. In terms of assembly, monomer.

Its subcellular location is the cytoplasm. It is found in the cell inner membrane. In terms of biological role, an essential GTPase that binds both GDP and GTP, with rapid nucleotide exchange. Plays a role in 16S rRNA processing and 30S ribosomal subunit biogenesis and possibly also in cell cycle regulation and energy metabolism. The sequence is that of GTPase Era from Pseudomonas entomophila (strain L48).